The primary structure comprises 146 residues: Large ribosomal subunit protein uL15 (146 aa).

Polar residues predominate over residues 1 to 10 (MRLNQLSPSA). Residues 1-54 (MRLNQLSPSAGSRPDAKRAGRGAGSGLGKTAGRGHKGQHSRSGGFHKVGFEGGQ) form a disordered region. Residues 21–31 (RGAGSGLGKTA) are compositionally biased toward gly residues.

It belongs to the universal ribosomal protein uL15 family. Part of the 50S ribosomal subunit.

Binds to the 23S rRNA. The sequence is that of Large ribosomal subunit protein uL15 from Halorhodospira halophila (strain DSM 244 / SL1) (Ectothiorhodospira halophila (strain DSM 244 / SL1)).